The chain runs to 310 residues: Probable metallo-hydrolase Mb2322c (310 aa).

The interval 1 to 29 (MVATRGRPCPTNFSRPQRPRVAGNGTKSQ) is disordered. His-137, Asp-139, Asp-141, His-142, His-221, Asp-242, and His-288 together coordinate Zn(2+).

This sequence belongs to the metallo-beta-lactamase superfamily. Zn(2+) serves as cofactor.

The protein is Probable metallo-hydrolase Mb2322c of Mycobacterium bovis (strain ATCC BAA-935 / AF2122/97).